Consider the following 271-residue polypeptide: Glutamate racemase (271 aa).

Substrate is bound by residues 10-11 (DS) and 42-43 (YG). Catalysis depends on C74, which acts as the Proton donor/acceptor. 75–76 (NT) is a substrate binding site. The active-site Proton donor/acceptor is C189. 190–191 (TH) is a binding site for substrate.

Belongs to the aspartate/glutamate racemases family.

It catalyses the reaction L-glutamate = D-glutamate. The protein operates within cell wall biogenesis; peptidoglycan biosynthesis. In terms of biological role, provides the (R)-glutamate required for cell wall biosynthesis. The sequence is that of Glutamate racemase from Bartonella bacilliformis (strain ATCC 35685 / KC583 / Herrer 020/F12,63).